A 408-amino-acid chain; its full sequence is MSWDQVWIDVNVASMDPSVSAPYGAIIDAALAVKDGKIAWVGPRGELPEFDVMSTPLYRGKGGWITPGLIDAHTHLVFAGNRANEFEKRLQGASYEEIARSGGGIISTVKACREASEAELFELGRKRLNALAKEGVTTVEIKSGYGLDTATELKLLRVARELGKHHHVDVKTTFLGAHAIPPEYKDDVEGYVDLVINEMLPAVIAEDLADAVDVFCENIAFNIEQTERVLTAAKDAGLDIKLHAEQLSNLGGSTMAAKLGAKSVDHIEYLDEDGVVALSKSGTCATLLPGAFYFLRETQMPPIDLLRKHKVPMVLASDYNPGSSPLCSSLLMLNMGCTLFRLTPEEALAGMTRNAAKALGVEDKVGVLAAGMQADFCLWDISTPAELAYSYGVGVCLEVVKDGHLVHQ.

The Fe(3+) site is built by His-73 and His-75. 2 residues coordinate Zn(2+): His-73 and His-75. Residues Arg-82, Tyr-145, and His-178 each contribute to the 4-imidazolone-5-propanoate site. Position 145 (Tyr-145) interacts with N-formimidoyl-L-glutamate. Fe(3+) is bound at residue His-243. His-243 provides a ligand contact to Zn(2+). Residue Gln-246 coordinates 4-imidazolone-5-propanoate. Asp-318 contacts Fe(3+). Position 318 (Asp-318) interacts with Zn(2+). Positions 320 and 322 each coordinate N-formimidoyl-L-glutamate. Residue Ser-323 coordinates 4-imidazolone-5-propanoate.

The protein belongs to the metallo-dependent hydrolases superfamily. HutI family. It depends on Zn(2+) as a cofactor. Fe(3+) is required as a cofactor.

It localises to the cytoplasm. The enzyme catalyses 4-imidazolone-5-propanoate + H2O = N-formimidoyl-L-glutamate. The protein operates within amino-acid degradation; L-histidine degradation into L-glutamate; N-formimidoyl-L-glutamate from L-histidine: step 3/3. Catalyzes the hydrolytic cleavage of the carbon-nitrogen bond in imidazolone-5-propanoate to yield N-formimidoyl-L-glutamate. It is the third step in the universal histidine degradation pathway. The polypeptide is Imidazolonepropionase (Shewanella woodyi (strain ATCC 51908 / MS32)).